The sequence spans 420 residues: D-tagatose-1,6-bisphosphate aldolase subunit GatZ (420 aa).

Belongs to the GatZ/KbaZ family. GatZ subfamily. Forms a complex with GatY.

It participates in carbohydrate metabolism; D-tagatose 6-phosphate degradation; D-glyceraldehyde 3-phosphate and glycerone phosphate from D-tagatose 6-phosphate: step 2/2. Functionally, component of the tagatose-1,6-bisphosphate aldolase GatYZ that is required for full activity and stability of the Y subunit. Could have a chaperone-like function for the proper and stable folding of GatY. When expressed alone, GatZ does not show any aldolase activity. Is involved in the catabolism of galactitol. The sequence is that of D-tagatose-1,6-bisphosphate aldolase subunit GatZ from Escherichia coli O7:K1 (strain IAI39 / ExPEC).